The following is a 281-amino-acid chain: Elongation factor 1-delta (281 aa).

A2 carries the N-acetylalanine modification. K17 bears the N6-acetyllysine mark. Phosphoserine is present on residues S37, S44, S60, S86, and S106. The leucine-zipper stretch occupies residues 80-115; the sequence is LVVRIASLEVENQSLRGVVQELQQAISKLEARLNVL. The residue at position 107 (K107) is an N6-acetyllysine. K117 bears the N6-acetyllysine; alternate mark. Position 117 is an N6-succinyllysine; alternate (K117). The disordered stretch occupies residues 118 to 172; that stretch reads SSPGHRATAPQTQHVSPMRQVEPPAKKPATPAEDDEDDDIDLFGSDNEEEDKEAA. At S119 the chain carries Phosphoserine. T129 carries the post-translational modification Phosphothreonine. Position 133 is a phosphoserine (S133). At T147 the chain carries Phosphothreonine. The segment covering 149-169 has biased composition (acidic residues); sequence AEDDEDDDIDLFGSDNEEEDK. At S162 the chain carries Phosphoserine; by CK2. Positions 173–281 are catalytic (GEF); the sequence is QLREERLRQY…SVDIAAFNKI (109 aa).

It belongs to the EF-1-beta/EF-1-delta family. In terms of assembly, EF-1 is composed of 4 subunits: alpha, beta, delta isoform 1, and gamma. Isoform 2 interacts with HSF1 and NFE2L2.

It is found in the nucleus. In terms of biological role, EF-1-beta and EF-1-delta stimulate the exchange of GDP bound to EF-1-alpha to GTP, regenerating EF-1-alpha for another round of transfer of aminoacyl-tRNAs to the ribosome. Functionally, regulates induction of heat-shock-responsive genes through association with heat shock transcription factors and direct DNA-binding at heat shock promoter elements (HSE). The polypeptide is Elongation factor 1-delta (EEF1D) (Macaca fascicularis (Crab-eating macaque)).